The following is a 155-amino-acid chain: Endoribonuclease YbeY (155 aa).

Residues histidine 120, histidine 124, and histidine 130 each contribute to the Zn(2+) site.

It belongs to the endoribonuclease YbeY family. Zn(2+) is required as a cofactor.

Its subcellular location is the cytoplasm. Single strand-specific metallo-endoribonuclease involved in late-stage 70S ribosome quality control and in maturation of the 3' terminus of the 16S rRNA. The chain is Endoribonuclease YbeY from Staphylococcus aureus (strain Mu3 / ATCC 700698).